An 87-amino-acid chain; its full sequence is Putative regulatory protein BCG9842_B1272 (87 aa).

Belongs to the RemA family.

This is Putative regulatory protein BCG9842_B1272 from Bacillus cereus (strain G9842).